A 363-amino-acid polypeptide reads, in one-letter code: Probable auxin efflux carrier component 5a (363 aa).

A run of 10 helical transmembrane segments spans residues valine 7 to serine 27, cysteine 39 to threonine 59, valine 72 to phenylalanine 92, serine 103 to alanine 123, leucine 134 to leucine 154, phenylalanine 222 to phenylalanine 242, valine 246 to alanine 266, leucine 281 to valine 301, valine 307 to alanine 327, and isoleucine 342 to isoleucine 362.

Belongs to the auxin efflux carrier (TC 2.A.69.1) family. Expressed in leaves, shoot apex and panicles. Expressed in roots, stem bases, stems, leaves and young panicles.

It localises to the membrane. Functionally, may act as a component of the auxin efflux carrier. In Oryza sativa subsp. japonica (Rice), this protein is Probable auxin efflux carrier component 5a.